Consider the following 184-residue polypeptide: ATP synthase subunit b, chloroplastic (184 aa).

The helical transmembrane segment at 27–49 (LATNPINLSVVLGVLIFFGKGVL) threads the bilayer.

Belongs to the ATPase B chain family. As to quaternary structure, F-type ATPases have 2 components, F(1) - the catalytic core - and F(0) - the membrane proton channel. F(1) has five subunits: alpha(3), beta(3), gamma(1), delta(1), epsilon(1). F(0) has four main subunits: a(1), b(1), b'(1) and c(10-14). The alpha and beta chains form an alternating ring which encloses part of the gamma chain. F(1) is attached to F(0) by a central stalk formed by the gamma and epsilon chains, while a peripheral stalk is formed by the delta, b and b' chains.

It localises to the plastid. Its subcellular location is the chloroplast thylakoid membrane. Functionally, f(1)F(0) ATP synthase produces ATP from ADP in the presence of a proton or sodium gradient. F-type ATPases consist of two structural domains, F(1) containing the extramembraneous catalytic core and F(0) containing the membrane proton channel, linked together by a central stalk and a peripheral stalk. During catalysis, ATP synthesis in the catalytic domain of F(1) is coupled via a rotary mechanism of the central stalk subunits to proton translocation. In terms of biological role, component of the F(0) channel, it forms part of the peripheral stalk, linking F(1) to F(0). The polypeptide is ATP synthase subunit b, chloroplastic (Carica papaya (Papaya)).